Reading from the N-terminus, the 196-residue chain is V-type proton ATPase subunit E (196 aa).

This sequence belongs to the V-ATPase E subunit family.

Its function is as follows. Produces ATP from ADP in the presence of a proton gradient across the membrane. This is V-type proton ATPase subunit E from Clostridium botulinum (strain Eklund 17B / Type B).